A 58-amino-acid polypeptide reads, in one-letter code: Small ribosomal subunit protein bS21 (58 aa).

Positions 39–58 are disordered; it reads DKPSVKKRAKSKAAAKYRSR. A compositionally biased stretch (basic residues) spans 43–58; it reads VKKRAKSKAAAKYRSR.

This sequence belongs to the bacterial ribosomal protein bS21 family.

The protein is Small ribosomal subunit protein bS21 (rpsU) of Chlamydia pneumoniae (Chlamydophila pneumoniae).